Reading from the N-terminus, the 338-residue chain is tRNA N6-adenosine threonylcarbamoyltransferase (338 aa).

Fe cation-binding residues include H111 and H115. Substrate-binding positions include 134-138 (LVSGG), D167, G180, and N272. D300 contributes to the Fe cation binding site.

Belongs to the KAE1 / TsaD family. Fe(2+) serves as cofactor.

The protein localises to the cytoplasm. The catalysed reaction is L-threonylcarbamoyladenylate + adenosine(37) in tRNA = N(6)-L-threonylcarbamoyladenosine(37) in tRNA + AMP + H(+). Its function is as follows. Required for the formation of a threonylcarbamoyl group on adenosine at position 37 (t(6)A37) in tRNAs that read codons beginning with adenine. Is involved in the transfer of the threonylcarbamoyl moiety of threonylcarbamoyl-AMP (TC-AMP) to the N6 group of A37, together with TsaE and TsaB. TsaD likely plays a direct catalytic role in this reaction. This chain is tRNA N6-adenosine threonylcarbamoyltransferase, found in Shewanella baltica (strain OS155 / ATCC BAA-1091).